Consider the following 177-residue polypeptide: Small ribosomal subunit protein uS5 (177 aa).

Residues 21–84 (LLDRVVKIKR…KQASRSMIHV (64 aa)) enclose the S5 DRBM domain.

It belongs to the universal ribosomal protein uS5 family. Part of the 30S ribosomal subunit. Contacts proteins S4 and S8.

In terms of biological role, with S4 and S12 plays an important role in translational accuracy. Its function is as follows. Located at the back of the 30S subunit body where it stabilizes the conformation of the head with respect to the body. The polypeptide is Small ribosomal subunit protein uS5 (Rhodopirellula baltica (strain DSM 10527 / NCIMB 13988 / SH1)).